Consider the following 166-residue polypeptide: Signal peptidase complex catalytic subunit SEC11 (166 aa).

The Cytoplasmic portion of the chain corresponds to 1–9 (MNIRQQLTQ). A helical; Signal-anchor for type II membrane protein transmembrane segment spans residues 10–30 (LLTLGYVFASAFMLWKTLSVV). Topologically, residues 31-166 (ANLHSPIVVV…LGLSSLFSNE (136 aa)) are lumenal. Residues S44, H83, and D108 each act as charge relay system in the active site. The segment at 152-163 (GLLGLLGLSSLF) is C-terminal short (CTS) helix.

Belongs to the peptidase S26B family. In terms of assembly, component of the signal peptidase complex (SPC) composed of a catalytic subunit SEC11 and three accessory subunits SPC1, SPC2 and SPC3. The complex induces a local thinning of the ER membrane which is used to measure the length of the signal peptide (SP) h-region of protein substrates. This ensures the selectivity of the complex towards h-regions shorter than 18-20 amino acids. SPC associates with the translocon complex.

It is found in the endoplasmic reticulum membrane. It catalyses the reaction Cleavage of hydrophobic, N-terminal signal or leader sequences from secreted and periplasmic proteins.. In terms of biological role, catalytic component of the signal peptidase complex (SPC) which catalyzes the cleavage of N-terminal signal sequences from nascent proteins as they are translocated into the lumen of the endoplasmic reticulum. Specifically cleaves N-terminal signal peptides that contain a hydrophobic alpha-helix (h-region) shorter than 18-20 amino acids. The sequence is that of Signal peptidase complex catalytic subunit SEC11 (SEC11) from Lodderomyces elongisporus (strain ATCC 11503 / CBS 2605 / JCM 1781 / NBRC 1676 / NRRL YB-4239) (Yeast).